Consider the following 1095-residue polypeptide: Voltage-gated inwardly rectifying potassium channel KCNH3 (1095 aa).

The Cytoplasmic segment spans residues 1–228; that stretch reads MPAMRGLLAP…HCGALRATWD (228 aa). The PAS domain occupies 18 to 90; that stretch reads IATRFDGTHS…QQIRKALDEH (73 aa). The PAC domain occupies 93–145; sequence FKAELILYRKSGLPFWCLLDVIPIKNEKGEVALFLVSHKDISETKNRGGPDNW. Over residues 137 to 150 the composition is skewed to basic and acidic residues; it reads KNRGGPDNWKERGG. Residues 137–161 form a disordered region; that stretch reads KNRGGPDNWKERGGGRRRYGRAGSK. A helical transmembrane segment spans residues 229 to 249; the sequence is GFILLATLYVAVTVPYSVCVS. Topologically, residues 250 to 259 are extracellular; it reads TAREPSAARG. A helical membrane pass occupies residues 260–280; that stretch reads PPSVCDLAVEVLFILDIVLNF. Over 281–302 the chain is Cytoplasmic; it reads RTTFVSKSGQVVFAPKSICLHY. Residues 303 to 323 form a helical membrane-spanning segment; sequence VTTWFLLDVIAALPFDLLHAF. The Extracellular segment spans residues 324–331; sequence KVNVYVGA. Residues 332–352 form a helical; Voltage-sensor membrane-spanning segment; the sequence is HLLKTVRLLRLLRLLPRLDRY. Residues 353–361 lie on the Cytoplasmic side of the membrane; sequence SQYSAVVLT. Residues 362–382 traverse the membrane as a helical segment; the sequence is LLMAVFALLAHWVACVWFYIG. Topologically, residues 383–464 are extracellular; the sequence is QQEIESSESE…GGPSLRSAYI (82 aa). Residues 417-447 form a disordered region; the sequence is PDGGNSSGQSENCSSSSSSSGSGGGRGSEAN. A compositionally biased stretch (low complexity) spans 419 to 436; it reads GGNSSGQSENCSSSSSSS. N-linked (GlcNAc...) asparagine glycans are attached at residues asparagine 421, asparagine 428, and asparagine 447. The pore-forming intramembrane region spans 465-485; it reads TSLYFALSSLTSVGFGNVSAN. The short motif at 476-481 is the Selectivity filter element; the sequence is SVGFGN. Topologically, residues 486 to 490 are extracellular; it reads TDTEK. The helical transmembrane segment at 491-511 threads the bilayer; that stretch reads IFSICTMLIGALMHAVVFGNV. The Cytoplasmic portion of the chain corresponds to 512-1095; sequence TAIIQRMYAR…QWTQEEGTGV (584 aa). Residue 593–708 participates in a nucleoside 3',5'-cyclic phosphate binding; it reads LFEAASRGCL…FAPRFSRGLR (116 aa). Disordered regions lie at residues 740-823, 854-883, and 965-1069; these read EEKE…LPPM, VGQS…PSEA, and GSVL…PWDP. Positions 784 to 796 are enriched in basic residues; that stretch reads TAPRPRLGGRGRP. Positions 857–872 are enriched in low complexity; it reads SGPECSSSPSPGTESG. The span at 974-991 shows a compositional bias: pro residues; the sequence is HPRPGQPPPLMAPWPWGP.

It belongs to the potassium channel family. H (Eag) (TC 1.A.1.20) subfamily. Kv12.2/KCNH3 sub-subfamily. The potassium channel is probably composed of a homo- or heterotetrameric complex of pore-forming alpha subunits that can associate with modulating beta subunits. Interacts with KCNE1 and KCNE3; these interactions regulate KCNH3 trafficking to the plasma membrane and its subsequent voltage-gated potassium channel activity. Post-translationally, N-glycosylated. N-glycosylation mediates traffick to the cell membrane but is not necessary for voltage-gated potassium channel activity. Detected in brain, but not in other tissues.

It is found in the cell membrane. The enzyme catalyses K(+)(in) = K(+)(out). Its function is as follows. Pore-forming (alpha) subunit of a voltage-gated inwardly rectifying potassium channel. Charactherized by a fast rate of activation during depolarization followed by a rapid inactivation at much more depolarized value causing inward rectification due to a C-type inactivation mechanism. Exhibits a rapid recovery from inactivation. This chain is Voltage-gated inwardly rectifying potassium channel KCNH3, found in Mus musculus (Mouse).